Consider the following 105-residue polypeptide: MTGYRVIHLTGIYYTFYRRKSFFFFFLEYLHNSLRVLSWKGIITKIAASPFVIVLYFNTAFFNPFKTLYENEKKKAKKNLKLTRENASLSIRKMHQYSAIIPSGT.

A helical transmembrane segment spans residues 41–62 (GIITKIAASPFVIVLYFNTAFF).

It localises to the membrane. This is an uncharacterized protein from Saccharomyces cerevisiae (strain ATCC 204508 / S288c) (Baker's yeast).